The chain runs to 552 residues: Probable bifunctional methylthioribose-1-phosphate isomerase/methylthioribulose-1-phosphate dehydratase (552 aa).

The segment at 1 to 333 is methylthioribose-1-phosphate isomerase activity; sequence MRPIDDSSLT…VVTEHGVVHG (333 aa). Residues 49 to 51, Arg-91, and Gln-195 each bind substrate; that span reads RGA. The active-site Proton donor is the Asp-236. Position 246–247 (246–247) interacts with substrate; it reads NK. Residues 334–535 are methylthioribulose-1-phosphate dehydratase activity; the sequence is TVAAEPGARI…AVCELVLRTG (202 aa). Zn(2+)-binding residues include His-427 and His-429.

It in the N-terminal section; belongs to the eIF-2B alpha/beta/delta subunits family. MtnA subfamily. In the C-terminal section; belongs to the aldolase class II family. MtnB subfamily. Zn(2+) serves as cofactor.

The enzyme catalyses 5-(methylsulfanyl)-alpha-D-ribose 1-phosphate = 5-(methylsulfanyl)-D-ribulose 1-phosphate. It carries out the reaction 5-(methylsulfanyl)-D-ribulose 1-phosphate = 5-methylsulfanyl-2,3-dioxopentyl phosphate + H2O. Its pathway is amino-acid biosynthesis; L-methionine biosynthesis via salvage pathway; L-methionine from S-methyl-5-thio-alpha-D-ribose 1-phosphate: step 1/6. It participates in amino-acid biosynthesis; L-methionine biosynthesis via salvage pathway; L-methionine from S-methyl-5-thio-alpha-D-ribose 1-phosphate: step 2/6. Its function is as follows. Bifunctional protein that catalyzes the interconversion of methylthioribose-1-phosphate (MTR-1-P) into methylthioribulose-1-phosphate (MTRu-1-P), and the dehydration of methylthioribulose-1-phosphate (MTRu-1-P) into 2,3-diketo-5-methylthiopentyl-1-phosphate (DK-MTP-1-P). This chain is Probable bifunctional methylthioribose-1-phosphate isomerase/methylthioribulose-1-phosphate dehydratase (mtnAB), found in Nocardia farcinica (strain IFM 10152).